Reading from the N-terminus, the 419-residue chain is Synaptic vesicle membrane protein VAT-1 homolog-like (419 aa).

Residues methionine 1–alanine 25 are compositionally biased toward basic and acidic residues. Disordered stretches follow at residues methionine 1–leucine 36 and proline 384–glutamine 419. Serine 392 carries the post-translational modification Phosphoserine. A phosphothreonine mark is found at threonine 393 and threonine 395. Residue serine 396 is modified to Phosphoserine. Acidic residues predominate over residues glutamate 397–glycine 407. Residues aspartate 408 to glutamine 419 are compositionally biased toward basic and acidic residues.

The protein belongs to the zinc-containing alcohol dehydrogenase family. Quinone oxidoreductase subfamily. As to expression, detected in skin fibroblasts.

In Homo sapiens (Human), this protein is Synaptic vesicle membrane protein VAT-1 homolog-like (VAT1L).